A 304-amino-acid chain; its full sequence is ATP synthase gamma chain (304 aa).

It belongs to the ATPase gamma chain family. In terms of assembly, F-type ATPases have 2 components, CF(1) - the catalytic core - and CF(0) - the membrane proton channel. CF(1) has five subunits: alpha(3), beta(3), gamma(1), delta(1), epsilon(1). CF(0) has three main subunits: a, b and c.

The protein localises to the cell membrane. Its function is as follows. Produces ATP from ADP in the presence of a proton gradient across the membrane. The gamma chain is believed to be important in regulating ATPase activity and the flow of protons through the CF(0) complex. The polypeptide is ATP synthase gamma chain (Thermobifida fusca (strain YX)).